A 134-amino-acid polypeptide reads, in one-letter code: Putative nickel-responsive regulator (134 aa).

Positions 78, 89, 91, and 97 each coordinate Ni(2+).

This sequence belongs to the transcriptional regulatory CopG/NikR family. The cofactor is Ni(2+).

Transcriptional regulator. In Chlorobium phaeobacteroides (strain DSM 266 / SMG 266 / 2430), this protein is Putative nickel-responsive regulator.